A 134-amino-acid polypeptide reads, in one-letter code: DNA-directed RNA polymerase subunit omega (134 aa).

Residues 77–108 are disordered; the sequence is IDEPEPDPASLLAAGGNASASGDEEEDAPEAV. The segment covering 85–97 has biased composition (low complexity); that stretch reads ASLLAAGGNASAS.

It belongs to the RNA polymerase subunit omega family. The RNAP catalytic core consists of 2 alpha, 1 beta, 1 beta' and 1 omega subunit. When a sigma factor is associated with the core the holoenzyme is formed, which can initiate transcription.

It carries out the reaction RNA(n) + a ribonucleoside 5'-triphosphate = RNA(n+1) + diphosphate. Promotes RNA polymerase assembly. Latches the N- and C-terminal regions of the beta' subunit thereby facilitating its interaction with the beta and alpha subunits. This Rhizobium rhizogenes (strain K84 / ATCC BAA-868) (Agrobacterium radiobacter) protein is DNA-directed RNA polymerase subunit omega.